The sequence spans 321 residues: Cytochrome c biogenesis protein CcsA (321 aa).

The next 8 membrane-spanning stretches (helical) occupy residues 9–29 (ILTH…LMNL), 44–64 (GMIA…IYSG), 71–91 (LYES…VPYF), 98–118 (FSAI…SGLL), 143–163 (MLLS…LLVI), 225–245 (VISL…VWAN), 252–272 (WNWD…AIYL), and 286–306 (AIVA…VNLL).

It belongs to the CcmF/CycK/Ccl1/NrfE/CcsA family. May interact with Ccs1.

It localises to the plastid. The protein localises to the chloroplast thylakoid membrane. Its function is as follows. Required during biogenesis of c-type cytochromes (cytochrome c6 and cytochrome f) at the step of heme attachment. This is Cytochrome c biogenesis protein CcsA from Acorus calamus var. americanus (American sweet flag).